Reading from the N-terminus, the 123-residue chain is MENSLFKKSEKKVRRALRVRKVLRGSSLKPRLSVVKTNKHIYVQLIDDSIGKTLASVSTIAKSSKAAGLVKKNQGVAKALGVQIAEIGKSLQVDRVVFDRGPFKYHGIIAMVADGAREGGLQF.

The protein belongs to the universal ribosomal protein uL18 family. In terms of assembly, part of the 50S ribosomal subunit; part of the 5S rRNA/L5/L18/L25 subcomplex. Contacts the 5S and 23S rRNAs.

Functionally, this is one of the proteins that bind and probably mediate the attachment of the 5S RNA into the large ribosomal subunit, where it forms part of the central protuberance. The sequence is that of Large ribosomal subunit protein uL18 from Chlamydia abortus (strain DSM 27085 / S26/3) (Chlamydophila abortus).